The sequence spans 349 residues: Ferredoxin--NADP reductase (349 aa).

7 residues coordinate FAD: Asp-43, Gln-51, Tyr-56, Val-96, Phe-131, Asp-295, and Ser-336.

Belongs to the ferredoxin--NADP reductase type 2 family. Homodimer. It depends on FAD as a cofactor.

It carries out the reaction 2 reduced [2Fe-2S]-[ferredoxin] + NADP(+) + H(+) = 2 oxidized [2Fe-2S]-[ferredoxin] + NADPH. The protein is Ferredoxin--NADP reductase of Paraburkholderia phytofirmans (strain DSM 17436 / LMG 22146 / PsJN) (Burkholderia phytofirmans).